The following is a 169-amino-acid chain: Small ribosomal subunit protein bS18c (169 aa).

Residues 1-61 (MYTSKQPFLK…RRPRIGPGDR (61 aa)) form a disordered region. Residues 27 to 55 (QTFRKSKQTFRKFKQPFRKSKQPFRRRPR) are compositionally biased toward basic residues.

It belongs to the bacterial ribosomal protein bS18 family. Part of the 30S ribosomal subunit.

It is found in the plastid. Its subcellular location is the chloroplast. The chain is Small ribosomal subunit protein bS18c from Agrostis stolonifera (Creeping bentgrass).